The sequence spans 384 residues: 4-hydroxy-3-methylbut-2-en-1-yl diphosphate synthase (flavodoxin) (384 aa).

The [4Fe-4S] cluster site is built by cysteine 280, cysteine 283, cysteine 315, and glutamate 322.

Belongs to the IspG family. The cofactor is [4Fe-4S] cluster.

The catalysed reaction is (2E)-4-hydroxy-3-methylbut-2-enyl diphosphate + oxidized [flavodoxin] + H2O + 2 H(+) = 2-C-methyl-D-erythritol 2,4-cyclic diphosphate + reduced [flavodoxin]. The protein operates within isoprenoid biosynthesis; isopentenyl diphosphate biosynthesis via DXP pathway; isopentenyl diphosphate from 1-deoxy-D-xylulose 5-phosphate: step 5/6. Converts 2C-methyl-D-erythritol 2,4-cyclodiphosphate (ME-2,4cPP) into 1-hydroxy-2-methyl-2-(E)-butenyl 4-diphosphate. In Parafrankia sp. (strain EAN1pec), this protein is 4-hydroxy-3-methylbut-2-en-1-yl diphosphate synthase (flavodoxin).